The following is a 461-amino-acid chain: MPSVAIAGAGLVGALNACFFAQKGWDVSVYEFRKDIRTMKHVQGRSINLALSQRGKSALEAVGLKEYIVNQGVPLYARLVHNKDGKTYSRQPYGKPGEHIVSINRRHLNEVMITQAEKSPNVKFFFEHKVKSVDYDKKQLVVQCTSQPSRIPTFGTKSPPAEHEEFHVEADLIIACDGAYSAVRRSLMTIPRFDFSQEYIEHGYVELNIMANNNEFAFEENVFHLWPRGHFTLIALANRDKTFTVTIFAPFTEFEKHMSTTEEVLSFFEENFPDAYLLLGKEHIADTFNRVKPQSLVSIKCSPHSFFNNLVLMGDAAHAMVPFYGQGMNCGFEDCLVFSETLEEQNNDIASAVQVYSERRVNDAHTINDLAMYNYEELKDLVNKNSYKLRKKFDGFMNAIFPKSWIPLYSMVTFTRIPYSEVVDRRRKQDRILSNLWKTTSTLALIGAAIGIYSNRGRLGL.

2 helical membrane passes run 395-415 (GFMN…VTFT) and 432-452 (ILSN…AIGI).

It belongs to the aromatic-ring hydroxylase family. KMO subfamily. FAD serves as cofactor.

The protein localises to the mitochondrion. The protein resides in the membrane. It carries out the reaction L-kynurenine + NADPH + O2 + H(+) = 3-hydroxy-L-kynurenine + NADP(+) + H2O. The protein operates within cofactor biosynthesis; NAD(+) biosynthesis; quinolinate from L-kynurenine: step 1/3. Its function is as follows. Catalyzes the hydroxylation of L-kynurenine (L-Kyn) to form 3-hydroxy-L-kynurenine (L-3OHKyn). Required for synthesis of quinolinic acid. In Caenorhabditis briggsae, this protein is Kynurenine 3-monooxygenase.